Reading from the N-terminus, the 235-residue chain is Purine nucleoside phosphorylase DeoD-type (235 aa).

His-4 contributes to the a purine D-ribonucleoside binding site. Residues Gly-20, Arg-24, Arg-43, and 87–90 (RVGT) each bind phosphate. A purine D-ribonucleoside-binding positions include Glu-162, 179–181 (EME), and 203–204 (SD). Asp-204 acts as the Proton donor in catalysis.

The protein belongs to the PNP/UDP phosphorylase family. In terms of assembly, homohexamer; trimer of homodimers.

It carries out the reaction a purine D-ribonucleoside + phosphate = a purine nucleobase + alpha-D-ribose 1-phosphate. The catalysed reaction is a purine 2'-deoxy-D-ribonucleoside + phosphate = a purine nucleobase + 2-deoxy-alpha-D-ribose 1-phosphate. Functionally, catalyzes the reversible phosphorolytic breakdown of the N-glycosidic bond in the beta-(deoxy)ribonucleoside molecules, with the formation of the corresponding free purine bases and pentose-1-phosphate. This is Purine nucleoside phosphorylase DeoD-type from Bacillus cytotoxicus (strain DSM 22905 / CIP 110041 / 391-98 / NVH 391-98).